We begin with the raw amino-acid sequence, 96 residues long: Co-chaperonin GroES (96 aa).

Belongs to the GroES chaperonin family. As to quaternary structure, heptamer of 7 subunits arranged in a ring. Interacts with the chaperonin GroEL.

The protein localises to the cytoplasm. Its function is as follows. Together with the chaperonin GroEL, plays an essential role in assisting protein folding. The GroEL-GroES system forms a nano-cage that allows encapsulation of the non-native substrate proteins and provides a physical environment optimized to promote and accelerate protein folding. GroES binds to the apical surface of the GroEL ring, thereby capping the opening of the GroEL channel. This Acinetobacter baumannii (strain AB307-0294) protein is Co-chaperonin GroES.